Reading from the N-terminus, the 644-residue chain is G-protein coupled receptor-associated protein LMBRD2 (644 aa).

Residues 1-4 (MGTV) lie on the Extracellular side of the membrane. Residues 5–27 (SLAVQLFIVFLLTSYLLNKYSTI) form a helical membrane-spanning segment. At 28-31 (RKQN) the chain is on the cytoplasmic side. A helical membrane pass occupies residues 32–52 (PIVTISTFIGWYFSLIIVFVL). At 53 to 102 (PLDVAITFFHKCENDRQRVLNTTSTPAPIVPECELPGGYVPDDVLFDLWR) the chain is on the extracellular side. Residue N73 is glycosylated (N-linked (GlcNAc...) asparagine). A helical membrane pass occupies residues 103–123 (VVYWSAQILTWLILPLLQSYV). The Cytoplasmic portion of the chain corresponds to 124–145 (TAGNFTIFGKIRAAVINNTVYY). The chain crosses the membrane as a helical span at residues 146-166 (AIYSLCFLAILIYAMFKGVSI). Residues 167–172 (NIENLK) lie on the Extracellular side of the membrane. A helical membrane pass occupies residues 173–193 (VILVSASNTWGLFLLVVLLGH). Over 194 to 369 (GLVELPRSLW…RLQTPFCRVL (176 aa)) the chain is Cytoplasmic. Positions 216–245 (YFDIEKLASEKSEAEENVKEIYKKVRVLFN) form a coiled coil. The chain crosses the membrane as a helical span at residues 370–390 (GVVTVFMTFFVLFSECTFFVV). Over 391 to 412 (SYTVSPAAFVTEYASNRFHYKY) the chain is Extracellular. A helical transmembrane segment spans residues 413-433 (TQFVAFGIIVYLITCAYFTIF). Topologically, residues 434-453 (RLQIYKYYHLDPNGHTDENS) are cytoplasmic. The chain crosses the membrane as a helical span at residues 454-474 (ILFSAILLCRLTPPICLNFLG). At 475 to 502 (MIHMDSHVSMAKSFGVETQFTKLMGHLD) the chain is on the extracellular side. Residues 503-523 (VIPILAKGINIYLPICIILLC) form a helical membrane-spanning segment. The Cytoplasmic segment spans residues 524–644 (AIHYYRVGAY…PSSSGFFDDM (121 aa)). Over residues 567–576 (SIKRSNERNQ) the composition is skewed to basic and acidic residues. The tract at residues 567–644 (SIKRSNERNQ…PSSSGFFDDM (78 aa)) is disordered. Over residues 578 to 594 (NQSWTNTITSNTSTTSN) the composition is skewed to low complexity. Residues 621–644 (VSSTTRISLSPTEHPSSSGFFDDM) are compositionally biased toward polar residues.

This sequence belongs to the LIMR family.

It localises to the cell membrane. Functionally, may associate with G-protein coupled receptors and regulate downstream signaling pathways. The protein is G-protein coupled receptor-associated protein LMBRD2 of Caenorhabditis briggsae.